A 105-amino-acid polypeptide reads, in one-letter code: Large ribosomal subunit protein uL24 (105 aa).

This sequence belongs to the universal ribosomal protein uL24 family. As to quaternary structure, part of the 50S ribosomal subunit.

Functionally, one of two assembly initiator proteins, it binds directly to the 5'-end of the 23S rRNA, where it nucleates assembly of the 50S subunit. Its function is as follows. One of the proteins that surrounds the polypeptide exit tunnel on the outside of the subunit. In Nitrosomonas europaea (strain ATCC 19718 / CIP 103999 / KCTC 2705 / NBRC 14298), this protein is Large ribosomal subunit protein uL24.